The chain runs to 420 residues: Histidine--tRNA ligase (420 aa).

The protein belongs to the class-II aminoacyl-tRNA synthetase family. Homodimer.

It is found in the cytoplasm. The catalysed reaction is tRNA(His) + L-histidine + ATP = L-histidyl-tRNA(His) + AMP + diphosphate + H(+). The sequence is that of Histidine--tRNA ligase from Macrococcus caseolyticus (strain JCSC5402) (Macrococcoides caseolyticum).